Here is a 706-residue protein sequence, read N- to C-terminus: Polyribonucleotide nucleotidyltransferase (706 aa).

Residues D486 and D492 each contribute to the Mg(2+) site. The region spanning 552 to 611 (PRIIAMKINPEKIRDVIGKGGAVIRALTEETGTQIDIQEDGSVKIACTSMEAGELAKKRI) is the KH domain. Residues 621–689 (GKVYEGPVIK…EKGRLRLSMK (69 aa)) enclose the S1 motif domain.

It belongs to the polyribonucleotide nucleotidyltransferase family. Requires Mg(2+) as cofactor.

The protein localises to the cytoplasm. The enzyme catalyses RNA(n+1) + phosphate = RNA(n) + a ribonucleoside 5'-diphosphate. Involved in mRNA degradation. Catalyzes the phosphorolysis of single-stranded polyribonucleotides processively in the 3'- to 5'-direction. In Thiobacillus denitrificans (strain ATCC 25259 / T1), this protein is Polyribonucleotide nucleotidyltransferase.